The sequence spans 376 residues: Small RNA 2'-O-methyltransferase (376 aa).

3 residues coordinate S-adenosyl-L-methionine: Thr49, Asp67, and Ser103. Mg(2+) is bound by residues Glu121, Glu124, His125, and His171.

It belongs to the methyltransferase superfamily. HEN1 family. Mg(2+) serves as cofactor.

The protein resides in the cytoplasm. It carries out the reaction small RNA 3'-end nucleotide + S-adenosyl-L-methionine = small RNA 3'-end 2'-O-methylnucleotide + S-adenosyl-L-homocysteine + H(+). Methyltransferase that adds a 2'-O-methyl group at the 3'-end of piRNAs, a class of 24 to 30 nucleotide RNAs that are generated by a Dicer-independent mechanism and are primarily derived from transposons and other repeated sequence elements. This probably protects the 3'-end of piRNAs from uridylation activity and subsequent degradation. Stabilization of piRNAs is essential for gametogenesis. The sequence is that of Small RNA 2'-O-methyltransferase (HENMT1) from Gallus gallus (Chicken).